Reading from the N-terminus, the 156-residue chain is Ribosomal RNA large subunit methyltransferase H (156 aa).

Residues L73, G104, and 123 to 128 (ISSLTL) contribute to the S-adenosyl-L-methionine site.

Belongs to the RNA methyltransferase RlmH family. In terms of assembly, homodimer.

The protein localises to the cytoplasm. The catalysed reaction is pseudouridine(1915) in 23S rRNA + S-adenosyl-L-methionine = N(3)-methylpseudouridine(1915) in 23S rRNA + S-adenosyl-L-homocysteine + H(+). In terms of biological role, specifically methylates the pseudouridine at position 1915 (m3Psi1915) in 23S rRNA. The chain is Ribosomal RNA large subunit methyltransferase H from Herminiimonas arsenicoxydans.